We begin with the raw amino-acid sequence, 325 residues long: ADP-ribose glycohydrolase MACROD1 (325 aa).

Residues lysine 96, lysine 103, and lysine 129 each carry the N6-succinyllysine modification. A Glycyl lysine isopeptide (Lys-Gly) (interchain with G-Cter in SUMO2) cross-link involves residue lysine 138. The Macro domain maps to 141–322 (EPRYKKDKQL…IYRSRLPHYF (182 aa)). 159-161 (SDI) contacts substrate. N6-acetyllysine is present on lysine 163. Residues 172-174 (AAN), 179-184 (GGGGVD), 267-273 (ISTGVFG), and phenylalanine 306 each bind substrate.

This sequence belongs to the MacroD-type family. MacroD1/2-like subfamily. Interacts with ESR1; Interacts in a manner that is estrogen independent but is enhanced by estrogen. Interacts (via macro domain) with AR.

The protein localises to the nucleus. The enzyme catalyses 3''-O-acetyl-ADP-D-ribose + H2O = ADP-D-ribose + acetate + H(+). It carries out the reaction 2''-O-acetyl-ADP-D-ribose + H2O = ADP-D-ribose + acetate + H(+). The catalysed reaction is 4-O-(ADP-D-ribosyl)-L-aspartyl-[protein] + H2O = L-aspartyl-[protein] + ADP-D-ribose + H(+). It catalyses the reaction 5-O-(ADP-D-ribosyl)-L-glutamyl-[protein] + H2O = L-glutamyl-[protein] + ADP-D-ribose + H(+). The enzyme catalyses alpha-NAD(+) + H2O = ADP-D-ribose + nicotinamide + H(+). Subject to competitive inhibition by the product ADP-ribose. Its function is as follows. Removes ADP-ribose from aspartate and glutamate residues in proteins bearing a single ADP-ribose moiety. Inactive towards proteins bearing poly-ADP-ribose. Deacetylates O-acetyl-ADP ribose, a signaling molecule generated by the deacetylation of acetylated lysine residues in histones and other proteins. Plays a role in estrogen signaling. Binds to androgen receptor (AR) and amplifies the transactivation function of AR in response to androgen. May play an important role in carcinogenesis and/or progression of hormone-dependent cancers by feed-forward mechanism that activates ESR1 transactivation. Could be an ESR1 coactivator, providing a positive feedback regulatory loop for ESR1 signal transduction. Could be involved in invasive growth by down-regulating CDH1 in endometrial cancer cells. Enhances ESR1-mediated transcription activity. The sequence is that of ADP-ribose glycohydrolase MACROD1 from Homo sapiens (Human).